The chain runs to 204 residues: UPF0301 protein Mflv_0850 (204 aa).

The protein belongs to the UPF0301 (AlgH) family.

The chain is UPF0301 protein Mflv_0850 from Mycolicibacterium gilvum (strain PYR-GCK) (Mycobacterium gilvum (strain PYR-GCK)).